Consider the following 497-residue polypeptide: NAD(P)H-quinone oxidoreductase chain 4, chloroplastic (497 aa).

14 helical membrane passes run 4–24 (FPWL…IFLF), 35–55 (YTVC…CYHF), 84–104 (GLSI…TLAA), 111–131 (CKLF…PFSS), 134–154 (ILLF…LLAM), 167–187 (FILY…GIGL), 208–228 (ALEI…SPII), 242–262 (HYST…YGLV), 274–294 (SIFC…AASA), 305–325 (IAYS…SISD), 330–350 (GAIL…FLSG), 386–406 (LALP…GIIT), 411–431 (FLIM…LTPI), and 463–483 (FISI…DFIF).

This sequence belongs to the complex I subunit 4 family.

It localises to the plastid. The protein resides in the chloroplast thylakoid membrane. It carries out the reaction a plastoquinone + NADH + (n+1) H(+)(in) = a plastoquinol + NAD(+) + n H(+)(out). It catalyses the reaction a plastoquinone + NADPH + (n+1) H(+)(in) = a plastoquinol + NADP(+) + n H(+)(out). The sequence is that of NAD(P)H-quinone oxidoreductase chain 4, chloroplastic (ndhD) from Lotus japonicus (Lotus corniculatus var. japonicus).